The following is a 92-amino-acid chain: Small ribosomal subunit protein bS20 (92 aa).

Residues 1 to 23 (MANTTSAKKATRKIARRTDVNKA) form a disordered region.

It belongs to the bacterial ribosomal protein bS20 family.

In terms of biological role, binds directly to 16S ribosomal RNA. This is Small ribosomal subunit protein bS20 from Rhizobium etli (strain CIAT 652).